Consider the following 126-residue polypeptide: Fluoride-specific ion channel FluC 1 (126 aa).

A run of 3 helical transmembrane segments spans residues 37 to 57, 67 to 87, and 98 to 118; these read HWGT…VLAL, IALL…TFVV, and LLAA…AAAA. Positions 77 and 80 each coordinate Na(+).

It belongs to the fluoride channel Fluc/FEX (TC 1.A.43) family.

It is found in the cell inner membrane. The enzyme catalyses fluoride(in) = fluoride(out). Its activity is regulated as follows. Na(+) is not transported, but it plays an essential structural role and its presence is essential for fluoride channel function. Fluoride-specific ion channel. Important for reducing fluoride concentration in the cell, thus reducing its toxicity. This Parasynechococcus marenigrum (strain WH8102) protein is Fluoride-specific ion channel FluC 1.